A 330-amino-acid polypeptide reads, in one-letter code: Tryptophan--tRNA ligase (330 aa).

ATP is bound by residues 10 to 12 (QAT) and 18 to 19 (GN). The short motif at 11–19 (ATGSLHLGN) is the 'HIGH' region element. An L-tryptophan-binding site is contributed by D134. Residues 146 to 148 (GED), I186, and 195 to 199 (KMSKS) contribute to the ATP site. A 'KMSKS' region motif is present at residues 195 to 199 (KMSKS).

Belongs to the class-I aminoacyl-tRNA synthetase family. Homodimer.

The protein resides in the cytoplasm. The enzyme catalyses tRNA(Trp) + L-tryptophan + ATP = L-tryptophyl-tRNA(Trp) + AMP + diphosphate + H(+). Its function is as follows. Catalyzes the attachment of tryptophan to tRNA(Trp). This chain is Tryptophan--tRNA ligase, found in Rickettsia conorii (strain ATCC VR-613 / Malish 7).